The sequence spans 112 residues: 2Fe-2S ferredoxin (112 aa).

One can recognise a 2Fe-2S ferredoxin-type domain in the interval 5-107 (IKVTFIINDG…GIKVRIPATT (103 aa)). Residues cysteine 42, cysteine 48, cysteine 51, and cysteine 88 each contribute to the [2Fe-2S] cluster site.

The protein belongs to the adrenodoxin/putidaredoxin family. [2Fe-2S] cluster serves as cofactor.

Ferredoxin are iron-sulfur proteins that transfer electrons in a wide variety of metabolic reactions. The sequence is that of 2Fe-2S ferredoxin (fdxB) from Rickettsia conorii (strain ATCC VR-613 / Malish 7).